Consider the following 238-residue polypeptide: Aspartate/glutamate leucyltransferase (238 aa).

Belongs to the R-transferase family. Bpt subfamily.

The protein resides in the cytoplasm. It catalyses the reaction N-terminal L-glutamyl-[protein] + L-leucyl-tRNA(Leu) = N-terminal L-leucyl-L-glutamyl-[protein] + tRNA(Leu) + H(+). It carries out the reaction N-terminal L-aspartyl-[protein] + L-leucyl-tRNA(Leu) = N-terminal L-leucyl-L-aspartyl-[protein] + tRNA(Leu) + H(+). Functionally, functions in the N-end rule pathway of protein degradation where it conjugates Leu from its aminoacyl-tRNA to the N-termini of proteins containing an N-terminal aspartate or glutamate. This Shewanella sp. (strain MR-7) protein is Aspartate/glutamate leucyltransferase.